The chain runs to 197 residues: Putative methyltransferase Mtx subunit A (197 aa).

It belongs to the MtrA family. As to quaternary structure, may be part of a complex composed of 3 subunits; MtxA, MtxH and MtxX.

The chain is Putative methyltransferase Mtx subunit A (mtxA) from Methanosarcina barkeri (strain Fusaro / DSM 804).